A 322-amino-acid polypeptide reads, in one-letter code: Nucleoprotein (322 aa).

6 residues coordinate RNA: tyrosine 43, tyrosine 46, valine 76, arginine 122, lysine 240, and serine 269.

This sequence belongs to the tenuiviruses nucleocapsid protein family.

Its subcellular location is the virion. It localises to the host cytoplasm. Its function is as follows. Encapsidates the genome, protecting it from nucleases. The encapsidated genomic RNA is termed the nucleocapsid (NC), and serves as template for viral transcription and replication. The polypeptide is Nucleoprotein (Avena sativa (Oat)).